Reading from the N-terminus, the 194-residue chain is Cysteine and glycine-rich protein 2 (194 aa).

In terms of domain architecture, LIM zinc-binding 1 spans 10–61 (CGACGRTVYHAEEVQCDGRSFHRCCFLCMVCRKNLDSTTVAIHDAEVYCKSC). The Nuclear localization signal signature appears at 64–69 (KKYGPK). Positions 120–171 (CSRCGDSVYAAEKVIGAGKPWHKNCFRCAKCGKSLESTTLTEKEGEIYCKGC) constitute an LIM zinc-binding 2 domain.

The protein resides in the nucleus. Totally down-regulated in transformed cells. May therefore take part in the control of cell growth and differentiation. This Gallus gallus (Chicken) protein is Cysteine and glycine-rich protein 2 (CSRP2).